The chain runs to 357 residues: UDP-xylose transporter 3 (357 aa).

10 helical membrane passes run 7–27, 31–51, 75–95, 100–120, 132–152, 154–174, 194–214, 224–244, 250–270, and 280–300; these read FQLGTIGALSLSVVSSVSIVI, ALISTLGFTFATTLTSWHLLV, VMGFGILNGISIGLLNLSLGF, FYQMTKLAIIPCTVLLETLFF, LTILLLGVGIATVTDLQLNML, SVLSLLAVVTTCVAQIMTNTI, AITLFVTGPFLDGLLTNQNVF, FFIVLSCLISVSVNFSTFLVI, VTYQVLGHLKTCLVLAFGYVL, and ILGILVAVIGMVVYSYYCSIE. Ser-334 is subject to Phosphoserine.

It belongs to the TPT transporter family. TPT (TC 2.A.7.9) subfamily. Ubiquitous.

It is found in the golgi apparatus membrane. Its function is as follows. Nucleotide-sugar transporter that transports UDP-xylose and UMP in a strict counter-exchange mode. The protein is UDP-xylose transporter 3 of Arabidopsis thaliana (Mouse-ear cress).